The sequence spans 715 residues: Solute carrier organic anion transporter family member 1C1 (715 aa).

At 1 to 43 the chain is on the cytoplasmic side; it reads MDTSSKENAHLFHKNSAQPAGGPSFTVGYPSTEEARPCCGKLK. Residues 44-63 form a helical membrane-spanning segment; sequence VFLGALSFVYFAKALAEGYL. The Extracellular portion of the chain corresponds to 64–82; it reads KSTVTQIERRFEIPSSLVG. Residues 83 to 103 traverse the membrane as a helical segment; it reads IIDGSFEIGNLLVITFVSYFG. At 104 to 109 the chain is on the cytoplasmic side; sequence AKLHRP. A helical transmembrane segment spans residues 110–134; it reads KIIGAGCLVMGFGTMLIAVPQFFME. Topologically, residues 135 to 187 are extracellular; the sequence is KYSYEKYERYSPSSNVTPSISPCYLESSSPSPSSILGKSQNKISHECVGDSSS. Residues 188–216 traverse the membrane as a helical segment; that stretch reads SMWVYVFLGNLLRGLGETPIQPLGIAYLD. At 217–235 the chain is on the cytoplasmic side; sequence DFASEDNAAFYIGCVQTVA. Residues 236–256 traverse the membrane as a helical segment; that stretch reads IIGPIFGFLLGSLCAKLYVDI. At 257-274 the chain is on the extracellular side; that stretch reads GFVNLDHITITPKDPQWV. The chain crosses the membrane as a helical span at residues 275–299; sequence GAWWLGYLIAGFLSLLAAVPFWCLP. The Cytoplasmic portion of the chain corresponds to 300–351; the sequence is KTLPRSQSRENSGSTSEKSKFIDDPIHYQMAPGDDKMKIMEMAKDFLPSLKT. A helical transmembrane segment spans residues 352–373; it reads LFRNPVYILYLCASTVQFNSLF. At 374-393 the chain is on the extracellular side; the sequence is GMVTYKPKYIEQQYGQSSSK. The chain crosses the membrane as a helical span at residues 394-417; that stretch reads ANFVIGLINIPAVALGIFSGGIVM. Residues 418-421 lie on the Cytoplasmic side of the membrane; that stretch reads KKFR. The chain crosses the membrane as a helical span at residues 422-445; it reads LGICEATKLYLGSSVFGYLLFLSL. Residues 446 to 557 lie on the Extracellular side of the membrane; it reads FALGCENSSV…NGCSQMFLYF (112 aa). A glycan (N-linked (GlcNAc...) asparagine) is linked at Asn-452. In terms of domain architecture, Kazal-like spans 473 to 528; sequence RALFSDCNSRCKCSDSKWEPMCGDNGITYVSACLAGCQSSSRSGKNIIFSNCTCVG. 3 disulfide bridges follow: Cys-479–Cys-509, Cys-485–Cys-505, and Cys-494–Cys-526. Residues Asn-523 and Asn-536 are each glycosylated (N-linked (GlcNAc...) asparagine). Residues 558-580 form a helical membrane-spanning segment; it reads LVISVITSYTLSLGGIPGYILLL. Over 581-589 the chain is Cytoplasmic; sequence RCIQPQLKS. Residues 590-615 traverse the membrane as a helical segment; it reads FALGIYTLAVRVLAGIPAPVYFGVLI. Residues 616 to 649 are Extracellular-facing; that stretch reads DTSCLKWGFKKCGSRGSCRLYDSHAFRHIYLGLT. Residues 650–667 traverse the membrane as a helical segment; that stretch reads TLLGTVSVFLSMAVLFVL. Residues 668 to 715 lie on the Cytoplasmic side of the membrane; sequence KKKYVSKHSSLITTREKIGMSSSIKKETCAARDRGLQPKYWPGKETRL.

It belongs to the organo anion transporter (TC 2.A.60) family. In terms of tissue distribution, widely expressed throughout the brain except in the cerebellum. Not detected in kidney, heart, lung, skeletal muscle, spleen, liver, nor testis. Highly expressed in cerebral microvessels throughout the brain and in the choroid plexus (at mRNA and protein level).

It localises to the cell membrane. The enzyme catalyses 3,3',5'-triiodo-L-thyronine(out) = 3,3',5'-triiodo-L-thyronine(in). It carries out the reaction L-thyroxine(out) = L-thyroxine(in). It catalyses the reaction L-thyroxine sulfate(out) = L-thyroxine sulfate(in). The catalysed reaction is 17beta-estradiol 17-O-(beta-D-glucuronate)(out) = 17beta-estradiol 17-O-(beta-D-glucuronate)(in). The enzyme catalyses 3,3',5-triiodo-L-thyronine(out) = 3,3',5-triiodo-L-thyronine(in). Mediates the Na(+)-independent high affinity transport of thyroid hormones at the plasma membrane of brain capillary endothelial cells. The transport activity of substrates L-thyroxine (T4) and 3,3',5'-triiodo-L-thyronine (reverse T3, rT3) is much greater than that of 3,3',5-triiodo-L-thyronine (T3). The prehormone, T4, is the major form in the circulating blood and is converted to the active form, T3, by the iodothyronine-deiodinase in peripheral organs. T3 plays an essential role in brain development via binding to specific nuclear receptors (thyroid hormone receptor). Also transports organic anions such as the conjugated steroid 17-beta-glucuronosyl estradiol (17beta-estradiol 17-O-(beta-D-glucuronate)). Transports T4 and estrone-3-sulfate in a pH-insensitive manner. May serve as a drug efflux system at the blood brain barrier. This Mus musculus (Mouse) protein is Solute carrier organic anion transporter family member 1C1 (Slco1c1).